A 671-amino-acid polypeptide reads, in one-letter code: DNA ligase (671 aa).

NAD(+)-binding positions include 38 to 42 (DKEFD), 87 to 88 (SL), and E113. K115 (N6-AMP-lysine intermediate) is an active-site residue. Residues R136, E170, K282, and K306 each coordinate NAD(+). 4 residues coordinate Zn(2+): C396, C399, C414, and C419. Positions 586–671 (SDLQPFVGQS…LLKQEGIAID (86 aa)) constitute a BRCT domain.

The protein belongs to the NAD-dependent DNA ligase family. LigA subfamily. Mg(2+) is required as a cofactor. It depends on Mn(2+) as a cofactor.

The catalysed reaction is NAD(+) + (deoxyribonucleotide)n-3'-hydroxyl + 5'-phospho-(deoxyribonucleotide)m = (deoxyribonucleotide)n+m + AMP + beta-nicotinamide D-nucleotide.. Functionally, DNA ligase that catalyzes the formation of phosphodiester linkages between 5'-phosphoryl and 3'-hydroxyl groups in double-stranded DNA using NAD as a coenzyme and as the energy source for the reaction. It is essential for DNA replication and repair of damaged DNA. In Leptospira biflexa serovar Patoc (strain Patoc 1 / Ames), this protein is DNA ligase.